Reading from the N-terminus, the 109-residue chain is Ubiquitin-related modifier 1 homolog (109 aa).

Glycine 109 carries the post-translational modification 1-thioglycine. A Glycyl lysine isopeptide (Gly-Lys) (interchain with K-? in acceptor proteins) cross-link involves residue glycine 109.

This sequence belongs to the URM1 family. Post-translationally, C-terminal thiocarboxylation occurs in 2 steps, it is first acyl-adenylated (-COAMP) via the hesA/moeB/thiF part of the MOCS3 homolog, then thiocarboxylated (-COSH) via the rhodanese domain of the MOCS3 homolog.

Its subcellular location is the cytoplasm. Its pathway is tRNA modification; 5-methoxycarbonylmethyl-2-thiouridine-tRNA biosynthesis. Functionally, acts as a sulfur carrier required for 2-thiolation of mcm(5)S(2)U at tRNA wobble positions of cytosolic tRNA(Lys), tRNA(Glu) and tRNA(Gln). Serves as sulfur donor in tRNA 2-thiolation reaction by being thiocarboxylated (-COSH) at its C-terminus by MOCS3. The sulfur is then transferred to tRNA to form 2-thiolation of mcm(5)S(2)U. Also acts as a ubiquitin-like protein (UBL) that is covalently conjugated via an isopeptide bond to lysine residues of target proteins. The thiocarboxylated form serves as substrate for conjugation and oxidative stress specifically induces the formation of UBL-protein conjugates. The chain is Ubiquitin-related modifier 1 homolog from Bombyx mori (Silk moth).